A 454-amino-acid chain; its full sequence is UPF0210 protein Ppro_0613 (454 aa).

Belongs to the UPF0210 family. As to quaternary structure, homodimer.

In Pelobacter propionicus (strain DSM 2379 / NBRC 103807 / OttBd1), this protein is UPF0210 protein Ppro_0613.